The chain runs to 576 residues: Mycobactin import ATP-binding/permease protein IrtB (576 aa).

At 1–25 the chain is on the cytoplasmic side; sequence MIRTLIALVPADKRGTLGLYTVLTV. One can recognise an ABC transmembrane type-1 domain in the interval 19 to 299; that stretch reads LYTVLTVLSV…LSELTPAIES (281 aa). The helical transmembrane segment at 26–46 threads the bilayer; that stretch reads LSVVIRAAGTVLLVPLVAALF. The Periplasmic segment spans residues 47-52; sequence GDTPQD. A helical membrane pass occupies residues 53-73; it reads AWPWLGWLTAATAAGWIVDTT. Over 74–131 the chain is Cytoplasmic; that stretch reads TSRLGFDLGFAVLDHTQHDVADRMPNIRLDWLTAENTATARAAIASTGPELVGLVVNL. The next 2 membrane-spanning stretches (helical) occupy residues 132–152 and 153–173; these read LTPLIGAVLLPAAIAVALVAV and SPPLGLAALAGVVVLLGAMWA. The Cytoplasmic portion of the chain corresponds to 174 to 241; the sequence is SNRLSRKADT…RLLAMQIPGQ (68 aa). Residues 242-262 form a helical membrane-spanning segment; the sequence is LLFSLASQLALILLAGMATWL. At 263–267 the chain is on the periplasmic side; the sequence is TVRGE. A helical transmembrane segment spans residues 268–288; the sequence is LSVPEAVAMIVVVARYLEPFT. Over 289 to 576 the chain is Cytoplasmic; the sequence is SLSELTPAIE…HEAADWQITH (288 aa). Positions 332–565 constitute an ABC transporter domain; it reads IEFDCVTFGY…GGRFDEFWRR (234 aa). Residue 364 to 371 participates in ATP binding; the sequence is GPSGSGKS.

Belongs to the ABC transporter superfamily. Siderophore-Fe(3+) uptake transporter (SIUT) (TC 3.A.1.21) family. In terms of assembly, forms a heterodimer with IrtA.

Its subcellular location is the cell inner membrane. Part of the ABC transporter complex IrtAB involved in the import of iron-bound mycobactin (Fe-MBT) and carboxymycobactin (Fe-cMBT). Has a preference for Fe-MBT over Fe-cMBT. Transmembrane domains (TMD) form a pore in the membrane and the ATP-binding domain (NBD) is responsible for energy generation. The polypeptide is Mycobactin import ATP-binding/permease protein IrtB (Mycolicibacterium smegmatis (strain ATCC 700084 / mc(2)155) (Mycobacterium smegmatis)).